Here is a 610-residue protein sequence, read N- to C-terminus: Dopamine beta-hydroxylase (610 aa).

Topologically, residues 1-9 are cytoplasmic; it reads MKVPSPSVR. Residues 10–30 form a helical; Signal-anchor for type II membrane protein membrane-spanning segment; sequence EAASMYGTAVAIFLVILVAAL. The Intragranular segment spans residues 31 to 610; it reads QGSEPPESPF…TVVDIGGGKG (580 aa). A DOMON domain is found at 50–166; the sequence is GTLELSWNVS…GTVHLVYGIL (117 aa). N-linked (GlcNAc...) asparagine glycosylation is found at Asn57, Asn177, and Asn194. 6 cysteine pairs are disulfide-bonded: Cys147–Cys589, Cys225–Cys276, Cys262–Cys288, Cys383–Cys496, Cys387–Cys558, and Cys459–Cys481. Tyr223 is a catalytic residue. Residues His255 and His256 each contribute to the Cu(2+) site. Residues His326, His405, His407, and Met480 each contribute to the Cu(2+) site. Residue His405 is part of the active site. The segment at 586 to 610 is disordered; it reads TPRCPASRGRSPAGPTVVDIGGGKG.

Belongs to the copper type II ascorbate-dependent monooxygenase family. In terms of assembly, homotetramer; composed of two disulfide-linked dimers. The cofactor is Cu(2+). Proteolytic cleavage after the membrane-anchor leads to the release of the soluble form. In terms of processing, N-glycosylated. Detected in adrenal medulla chromaffin cells.

The protein localises to the cytoplasmic vesicle. It localises to the secretory vesicle lumen. It is found in the secretory vesicle. The protein resides in the chromaffin granule lumen. Its subcellular location is the secreted. The protein localises to the secretory vesicle membrane. It localises to the chromaffin granule membrane. It catalyses the reaction dopamine + 2 L-ascorbate + O2 = (R)-noradrenaline + 2 monodehydro-L-ascorbate radical + H2O. It functions in the pathway catecholamine biosynthesis; (R)-noradrenaline biosynthesis; (R)-noradrenaline from dopamine: step 1/1. In terms of biological role, catalyzes the hydroxylation of dopamine to noradrenaline (also known as norepinephrine), and is thus vital for regulation of these neurotransmitters. This chain is Dopamine beta-hydroxylase (DBH), found in Equus caballus (Horse).